Here is a 456-residue protein sequence, read N- to C-terminus: Phosphomannomutase (456 aa).

S98 (phosphoserine intermediate) is an active-site residue. The Mg(2+) site is built by S98, D245, D247, and D249.

This sequence belongs to the phosphohexose mutase family. Mg(2+) is required as a cofactor.

The enzyme catalyses alpha-D-mannose 1-phosphate = D-mannose 6-phosphate. It functions in the pathway nucleotide-sugar biosynthesis; GDP-alpha-D-mannose biosynthesis; alpha-D-mannose 1-phosphate from D-fructose 6-phosphate: step 2/2. Functionally, involved in the biosynthesis of the capsular polysaccharide colanic acid. The polypeptide is Phosphomannomutase (manB) (Escherichia coli (strain K12)).